The primary structure comprises 767 residues: DNA topoisomerase 1 (767 aa).

A compositionally biased stretch (basic and acidic residues) spans 1 to 23 (MSGDHLHNDSQIEADFRLNDSHK). The segment at 1-201 (MSGDHLHNDS…NKKKKPKKEE (201 aa)) is disordered. The residue at position 2 (Ser-2) is an N-acetylserine. Residues Ser-2 and Ser-10 each carry the phosphoserine modification. Basic residues predominate over residues 24–39 (HKDKHKDREHRHKEHK). Basic and acidic residues predominate over residues 40–110 (KDKEKDREKS…DAKIKKEKEN (71 aa)). Ser-59 is modified (phosphoserine). Residue Lys-103 forms a Glycyl lysine isopeptide (Lys-Gly) (interchain with G-Cter in SUMO2) linkage. Lys-105 is covalently cross-linked (Glycyl lysine isopeptide (Lys-Gly) (interchain with G-Cter in SUMO); alternate). Lys-105 participates in a covalent cross-link: Glycyl lysine isopeptide (Lys-Gly) (interchain with G-Cter in SUMO2); alternate. Ser-114 bears the Phosphoserine mark. Lys-119 participates in a covalent cross-link: Glycyl lysine isopeptide (Lys-Gly) (interchain with G-Cter in SUMO); alternate. Residue Lys-119 forms a Glycyl lysine isopeptide (Lys-Gly) (interchain with G-Cter in SUMO2); alternate linkage. Lys-119 participates in a covalent cross-link: Glycyl lysine isopeptide (Lys-Gly) (interchain with G-Cter in SUMO1); alternate. The span at 131–168 (PKEDIKPLKRPRDEDDADYKPKKIKTEDIKKEKKRKLE) shows a compositional bias: basic and acidic residues. Residues Lys-136 and Lys-150 each participate in a glycyl lysine isopeptide (Lys-Gly) (interchain with G-Cter in SUMO2) cross-link. Lys-155 participates in a covalent cross-link: Glycyl lysine isopeptide (Lys-Gly) (interchain with G-Cter in SUMO); alternate. Residue Lys-155 forms a Glycyl lysine isopeptide (Lys-Gly) (interchain with G-Cter in SUMO2); alternate linkage. Residues Lys-160 and Lys-166 each participate in a glycyl lysine isopeptide (Lys-Gly) (interchain with G-Cter in SUMO2) cross-link. Lys-174 participates in a covalent cross-link: Glycyl lysine isopeptide (Lys-Gly) (interchain with G-Cter in SUMO2); alternate. Position 174 is an N6-acetyllysine; alternate (Lys-174). The segment covering 181–201 (KDKDKKVPEPDNKKKKPKKEE) has biased composition (basic and acidic residues). Lys-206 is covalently cross-linked (Glycyl lysine isopeptide (Lys-Gly) (interchain with G-Cter in SUMO2)). Position 282 is an N6-acetyllysine (Lys-282). Lys-338 is covalently cross-linked (Glycyl lysine isopeptide (Lys-Gly) (interchain with G-Cter in SUMO2)). 2 interaction with DNA regions span residues 427–428 (KY) and 490–495 (RAGNEK). Residues 434–767 (SSRIKGEKDW…IDMADEDYEF (334 aa)) enclose the Topo IB-type catalytic domain. Ser-508 bears the Phosphoserine; by CK2 mark. Lys-551 is covalently cross-linked (Glycyl lysine isopeptide (Lys-Gly) (interchain with G-Cter in SUMO2)). The segment at 587–589 (TAK) is interaction with DNA. Glycyl lysine isopeptide (Lys-Gly) (interchain with G-Cter in SUMO2) cross-links involve residues Lys-644, Lys-702, and Lys-714. Tyr-725 acts as the O-(3'-phospho-DNA)-tyrosine intermediate in catalysis.

This sequence belongs to the type IB topoisomerase family. Monomer. Interacts with ERCC6. Interacts with TPRN; TPRN interacts with a number of DNA damage response proteins, is recruited to sites of DNA damage and may play a role in DNA damage repair. Post-translationally, sumoylated. Lys-119 is the main site of sumoylation. Sumoylation plays a role in partitioning TOP1 between nucleoli and nucleoplasm. Levels are dramatically increased on camptothecin (CPT) treatment. In terms of processing, phosphorylation at Ser-508 by CK2 increases binding to supercoiled DNA and sensitivity to camptothecin.

The protein resides in the nucleus. The protein localises to the nucleolus. It is found in the nucleoplasm. It catalyses the reaction ATP-independent breakage of single-stranded DNA, followed by passage and rejoining.. Specifically inhibited by camptothecin (CPT), a plant alkaloid with antitumor activity. Its function is as follows. Releases the supercoiling and torsional tension of DNA introduced during the DNA replication and transcription by transiently cleaving and rejoining one strand of the DNA duplex. Introduces a single-strand break via transesterification at a target site in duplex DNA. The scissile phosphodiester is attacked by the catalytic tyrosine of the enzyme, resulting in the formation of a DNA-(3'-phosphotyrosyl)-enzyme intermediate and the expulsion of a 5'-OH DNA strand. The free DNA strand then rotates around the intact phosphodiester bond on the opposing strand, thus removing DNA supercoils. Finally, in the religation step, the DNA 5'-OH attacks the covalent intermediate to expel the active-site tyrosine and restore the DNA phosphodiester backbone. Regulates the alternative splicing of tissue factor (F3) pre-mRNA in endothelial cells. Involved in the circadian transcription of the core circadian clock component BMAL1 by altering the chromatin structure around the ROR response elements (ROREs) on the BMAL1 promoter. This Chlorocebus aethiops (Green monkey) protein is DNA topoisomerase 1 (TOP1).